Consider the following 412-residue polypeptide: Phosphoglycerate kinase (412 aa).

Substrate is bound by residues 22–24 (DFN), Arg-37, 60–63 (HLGK), Arg-120, and Arg-172. Residues Lys-223, Gly-310, Glu-341, and 368–371 (GGDS) contribute to the ATP site.

The protein belongs to the phosphoglycerate kinase family. In terms of assembly, monomer.

Its subcellular location is the cytoplasm. The catalysed reaction is (2R)-3-phosphoglycerate + ATP = (2R)-3-phospho-glyceroyl phosphate + ADP. The protein operates within carbohydrate degradation; glycolysis; pyruvate from D-glyceraldehyde 3-phosphate: step 2/5. The sequence is that of Phosphoglycerate kinase from Spiroplasma citri.